Here is a 184-residue protein sequence, read N- to C-terminus: RNA 2',3'-cyclic phosphodiesterase (184 aa).

H42 functions as the Proton donor in the catalytic mechanism. 2 short sequence motifs (HXTX) span residues 42-45 and 127-130; these read HFTL and HLTV. The active-site Proton acceptor is H127.

The protein belongs to the 2H phosphoesterase superfamily. ThpR family.

The catalysed reaction is a 3'-end 2',3'-cyclophospho-ribonucleotide-RNA + H2O = a 3'-end 2'-phospho-ribonucleotide-RNA + H(+). Hydrolyzes RNA 2',3'-cyclic phosphodiester to an RNA 2'-phosphomonoester. This Methanothermobacter thermautotrophicus (strain ATCC 29096 / DSM 1053 / JCM 10044 / NBRC 100330 / Delta H) (Methanobacterium thermoautotrophicum) protein is RNA 2',3'-cyclic phosphodiesterase.